Reading from the N-terminus, the 994-residue chain is Valine--tRNA ligase (994 aa).

Positions Pro-43–His-53 match the 'HIGH' region motif. The segment covering Gln-329 to Ser-345 has biased composition (polar residues). The disordered stretch occupies residues Gln-329–Gln-355. The short motif at Lys-585–Ser-589 is the 'KMSKS' region element. An ATP-binding site is contributed by Lys-588. The disordered stretch occupies residues Ala-692–Arg-714. The span at Ala-696–Ala-707 shows a compositional bias: low complexity. The stretch at Leu-928–Leu-994 forms a coiled coil.

Belongs to the class-I aminoacyl-tRNA synthetase family. ValS type 1 subfamily. As to quaternary structure, monomer.

The protein resides in the cytoplasm. It carries out the reaction tRNA(Val) + L-valine + ATP = L-valyl-tRNA(Val) + AMP + diphosphate. In terms of biological role, catalyzes the attachment of valine to tRNA(Val). As ValRS can inadvertently accommodate and process structurally similar amino acids such as threonine, to avoid such errors, it has a 'posttransfer' editing activity that hydrolyzes mischarged Thr-tRNA(Val) in a tRNA-dependent manner. The protein is Valine--tRNA ligase of Xylella fastidiosa (strain 9a5c).